The following is a 261-amino-acid chain: Triosephosphate isomerase (261 aa).

10–12 (NWK) provides a ligand contact to substrate. His-100 (electrophile) is an active-site residue. Glu-172 functions as the Proton acceptor in the catalytic mechanism. Residues Gly-178, Ser-218, and 239-240 (GG) each bind substrate.

Belongs to the triosephosphate isomerase family. In terms of assembly, homodimer.

It localises to the cytoplasm. The catalysed reaction is D-glyceraldehyde 3-phosphate = dihydroxyacetone phosphate. Its pathway is carbohydrate biosynthesis; gluconeogenesis. The protein operates within carbohydrate degradation; glycolysis; D-glyceraldehyde 3-phosphate from glycerone phosphate: step 1/1. Involved in the gluconeogenesis. Catalyzes stereospecifically the conversion of dihydroxyacetone phosphate (DHAP) to D-glyceraldehyde-3-phosphate (G3P). The chain is Triosephosphate isomerase from Mycolicibacterium paratuberculosis (strain ATCC BAA-968 / K-10) (Mycobacterium paratuberculosis).